A 365-amino-acid chain; its full sequence is Phosphoserine aminotransferase (365 aa).

Arg-40 is an L-glutamate binding site. Residues 74–75 (AS), Phe-99, Thr-155, Asp-177, and Gln-200 contribute to the pyridoxal 5'-phosphate site. The residue at position 201 (Lys-201) is an N6-(pyridoxal phosphate)lysine. 241 to 242 (NT) contributes to the pyridoxal 5'-phosphate binding site.

This sequence belongs to the class-V pyridoxal-phosphate-dependent aminotransferase family. SerC subfamily. As to quaternary structure, homodimer. Pyridoxal 5'-phosphate serves as cofactor.

It is found in the cytoplasm. It catalyses the reaction O-phospho-L-serine + 2-oxoglutarate = 3-phosphooxypyruvate + L-glutamate. It carries out the reaction 4-(phosphooxy)-L-threonine + 2-oxoglutarate = (R)-3-hydroxy-2-oxo-4-phosphooxybutanoate + L-glutamate. Its pathway is amino-acid biosynthesis; L-serine biosynthesis; L-serine from 3-phospho-D-glycerate: step 2/3. Its function is as follows. Catalyzes the reversible conversion of 3-phosphohydroxypyruvate to phosphoserine and of 3-hydroxy-2-oxo-4-phosphonooxybutanoate to phosphohydroxythreonine. The chain is Phosphoserine aminotransferase from Lactococcus lactis subsp. cremoris (strain SK11).